Reading from the N-terminus, the 472-residue chain is 3-isopropylmalate dehydratase large subunit (472 aa).

Positions 353, 414, and 417 each coordinate [4Fe-4S] cluster.

Belongs to the aconitase/IPM isomerase family. LeuC type 1 subfamily. Heterodimer of LeuC and LeuD. The cofactor is [4Fe-4S] cluster.

It catalyses the reaction (2R,3S)-3-isopropylmalate = (2S)-2-isopropylmalate. The protein operates within amino-acid biosynthesis; L-leucine biosynthesis; L-leucine from 3-methyl-2-oxobutanoate: step 2/4. In terms of biological role, catalyzes the isomerization between 2-isopropylmalate and 3-isopropylmalate, via the formation of 2-isopropylmaleate. This is 3-isopropylmalate dehydratase large subunit from Acinetobacter baumannii (strain AB0057).